Here is an 882-residue protein sequence, read N- to C-terminus: Translation initiation factor IF-2 (882 aa).

2 disordered regions span residues 67–202 (KTVS…EKAR) and 223–278 (ERYG…KHMK). 2 stretches are compositionally biased toward basic and acidic residues: residues 95–152 (VKRD…EAKA) and 161–202 (EQPK…EKAR). Positions 251 to 264 (GRRNRNKTQTKSKR) are enriched in basic residues. Positions 265–274 (GGKDAREGRE) are enriched in basic and acidic residues. One can recognise a tr-type G domain in the interval 382–551 (PRAPVVTIMG…LLQAEVLELK (170 aa)). A G1 region spans residues 391–398 (GHVDHGKT). 391–398 (GHVDHGKT) serves as a coordination point for GTP. The tract at residues 416 to 420 (GITQH) is G2. Residues 437–440 (DTPG) are G3. GTP is bound by residues 437-441 (DTPGH) and 491-494 (NKMD). The G4 stretch occupies residues 491 to 494 (NKMD). The interval 527–529 (SAK) is G5.

This sequence belongs to the TRAFAC class translation factor GTPase superfamily. Classic translation factor GTPase family. IF-2 subfamily.

It localises to the cytoplasm. In terms of biological role, one of the essential components for the initiation of protein synthesis. Protects formylmethionyl-tRNA from spontaneous hydrolysis and promotes its binding to the 30S ribosomal subunits. Also involved in the hydrolysis of GTP during the formation of the 70S ribosomal complex. The chain is Translation initiation factor IF-2 from Shewanella amazonensis (strain ATCC BAA-1098 / SB2B).